A 515-amino-acid polypeptide reads, in one-letter code: MRLIILNLLSLGITPSVVGHSGPHRQETQNLNNFLESNAINPAAINGETRHTGGVHLACAILEASNQTAVVFPSDGELYTQIDKAHASATAPKNPACIYTPNDVKGVSLGVKVATFVQAKFAIRSGGHSPMEYFANIDGGVLISLAGIKTLEYNADTQTQRSGFGNLWQDVYRHVNAQGRTVVGGRTGSVGLALTLGGGLSHFSNAYGWAAQNVLSYEMVLADGSIVIASEEENSDLYFAVKAGANNFGIVTHIVQRTYPLGKIWGGSMIFPGNASAQFMAALADYQAKGQLDKKSAILPYVGLIADAVVAQFSYLEPVERPEAFEAFYDIPVIQDLTQVWDTFAAMVTAPIPYNMTRFSYATTDLLYDKEAYLEIERICHKYIPRMRKLEGGDIMLMPQPISVSMVGEARARGSDPMGVADQPQLWFVVSSGWNLAQDDAEAESIMLDALAEVEEYTKSRALHLPFYFLNDAFSTQMPLQSYGAVTYGKLQAASRKYDPTRVFQELVPGGFKLV.

A signal peptide spans 1–25 (MRLIILNLLSLGITPSVVGHSGPHR). Asparagine 66 carries N-linked (GlcNAc...) asparagine glycosylation. Residues 91-261 (APKNPACIYT…THIVQRTYPL (171 aa)) form the FAD-binding PCMH-type domain. The residue at position 128 (histidine 128) is a Pros-8alpha-FAD histidine. Residues asparagine 274 and asparagine 355 are each glycosylated (N-linked (GlcNAc...) asparagine).

It belongs to the oxygen-dependent FAD-linked oxidoreductase family. FAD is required as a cofactor.

The enzyme catalyses prosolanapyrone II + O2 = prosolanapyrone III + H2O2. The catalysed reaction is prosolanapyrone III = (-)-solanapyrone A. It catalyses the reaction prosolanapyrone III = solanapyrone D. The protein operates within phytotoxin biosynthesis. Its function is as follows. Bifunctional solanapyrone synthase; part of the gene cluster that mediates the biosynthesis of the phytotoxin solanapyrone, a causal agent of early blight disease of potato and tomato. The prosolanapyrone synthase sol1 is a polyketide synthase that produces the octaketide desmethylprosolanapyrone I via sequential condensations of 7 malonyl-CoA units with one acetyl-CoA unit, and one methylation step. The octaketide backbone is further methylated by the sol2 O-methyltransferase to yield prosolanapyrone I. Prosolanapyrone I is hydroxylated to prosolanapyrone II by the cytochrome P450 monooxygenase sol6. The solanapyrone synthase sol5 then catalyzes the oxidation of prosolanapyrone II and the subsequent Diels Alder cycloisomerization of the product prosolanapyrone III to solanapyrones A and D. Solanapyrones A and D are then converted into solanapyrones B and E, respectively, by the sol3 dehydrogenase. The sequence is that of Bifunctional solanapyrone synthase (sol5) from Alternaria solani.